A 121-amino-acid polypeptide reads, in one-letter code: Small ribosomal subunit protein uS13 (121 aa).

The disordered stretch occupies residues 93 to 121; that stretch reads RHLPVRGQNTKNNARTRKGPAVSIAGKKK.

The protein belongs to the universal ribosomal protein uS13 family. In terms of assembly, part of the 30S ribosomal subunit. Forms a loose heterodimer with protein S19. Forms two bridges to the 50S subunit in the 70S ribosome.

In terms of biological role, located at the top of the head of the 30S subunit, it contacts several helices of the 16S rRNA. In the 70S ribosome it contacts the 23S rRNA (bridge B1a) and protein L5 of the 50S subunit (bridge B1b), connecting the 2 subunits; these bridges are implicated in subunit movement. Contacts the tRNAs in the A and P-sites. The protein is Small ribosomal subunit protein uS13 of Ligilactobacillus salivarius (strain UCC118) (Lactobacillus salivarius).